Reading from the N-terminus, the 394-residue chain is Peroxisomal membrane protein PEX25 (394 aa).

A compositionally biased stretch (polar residues) spans 1–25 (MSQFGTTDIVSGSETPPYSGASYQD). The tract at residues 1–65 (MSQFGTTDIV…SRSDDEDSQA (65 aa)) is disordered. The Cytoplasmic segment spans residues 1-366 (MSQFGTTDIV…LNLKTPKGTY (366 aa)). A compositionally biased stretch (basic and acidic residues) spans 51–65 (SHTESSRSDDEDSQA). Residues Ser58, Ser63, and Ser289 each carry the phosphoserine modification. A helical transmembrane segment spans residues 367 to 383 (AVLSLGSGLTGLVKLWI). At 384–394 (TTKRSLCSSKD) the chain is on the lumenal side.

Homooligomer. Interacts with PEX27 and PEX34.

It is found in the peroxisome membrane. Its function is as follows. Required for regulation of peroxisome size and maintenance. Has a role in the import of peroxisomal matrix proteins. Imports RHO1 into the peroxisome. Also promotes peroxisome division and biogenesis. This Saccharomyces cerevisiae (strain ATCC 204508 / S288c) (Baker's yeast) protein is Peroxisomal membrane protein PEX25 (PEX25).